The sequence spans 234 residues: Ankyrin repeat-containing protein C6C3.08 (234 aa).

5 ANK repeats span residues 36-66, 70-100, 106-135, 140-169, and 173-203; these read DKRT…KPDE, AGWT…DVDP, GGQT…ELIR, QGQT…PLNT, and YGFT…TLRK.

In Schizosaccharomyces pombe (strain 972 / ATCC 24843) (Fission yeast), this protein is Ankyrin repeat-containing protein C6C3.08.